A 205-amino-acid polypeptide reads, in one-letter code: RNA pyrophosphohydrolase (205 aa).

The region spanning 6–149 (GFRPNVGIVL…KRGVYARALR (144 aa)) is the Nudix hydrolase domain. A Nudix box motif is present at residues 38–59 (GGMNTDETPVEAMYRELREETG). Residues 177–205 (PGSSAAGHDSPRKRPRKRSGARPMRINND) form a disordered region. Basic residues predominate over residues 187–196 (PRKRPRKRSG).

Belongs to the Nudix hydrolase family. RppH subfamily. Requires a divalent metal cation as cofactor.

Accelerates the degradation of transcripts by removing pyrophosphate from the 5'-end of triphosphorylated RNA, leading to a more labile monophosphorylated state that can stimulate subsequent ribonuclease cleavage. This is RNA pyrophosphohydrolase from Xanthomonas oryzae pv. oryzae (strain MAFF 311018).